Here is a 236-residue protein sequence, read N- to C-terminus: 2-C-methyl-D-erythritol 4-phosphate cytidylyltransferase (236 aa).

It belongs to the IspD/TarI cytidylyltransferase family. IspD subfamily. Homodimer.

It carries out the reaction 2-C-methyl-D-erythritol 4-phosphate + CTP + H(+) = 4-CDP-2-C-methyl-D-erythritol + diphosphate. It participates in isoprenoid biosynthesis; isopentenyl diphosphate biosynthesis via DXP pathway; isopentenyl diphosphate from 1-deoxy-D-xylulose 5-phosphate: step 2/6. In terms of biological role, catalyzes the formation of 4-diphosphocytidyl-2-C-methyl-D-erythritol from CTP and 2-C-methyl-D-erythritol 4-phosphate (MEP). This Shigella flexneri serotype 5b (strain 8401) protein is 2-C-methyl-D-erythritol 4-phosphate cytidylyltransferase.